The following is a 310-amino-acid chain: Porphobilinogen deaminase (310 aa).

C242 carries the post-translational modification S-(dipyrrolylmethanemethyl)cysteine.

The protein belongs to the HMBS family. In terms of assembly, monomer. It depends on dipyrromethane as a cofactor.

It carries out the reaction 4 porphobilinogen + H2O = hydroxymethylbilane + 4 NH4(+). The protein operates within porphyrin-containing compound metabolism; protoporphyrin-IX biosynthesis; coproporphyrinogen-III from 5-aminolevulinate: step 2/4. Functionally, tetrapolymerization of the monopyrrole PBG into the hydroxymethylbilane pre-uroporphyrinogen in several discrete steps. This chain is Porphobilinogen deaminase, found in Shewanella sp. (strain W3-18-1).